A 131-amino-acid chain; its full sequence is Small ribosomal subunit protein uS9 (131 aa).

The interval 102-131 (AGFLTRDPRMKERRKYGLKKARKAPQFSKR) is disordered. The segment covering 112 to 131 (KERRKYGLKKARKAPQFSKR) has biased composition (basic residues).

It belongs to the universal ribosomal protein uS9 family.

The polypeptide is Small ribosomal subunit protein uS9 (Desulfitobacterium hafniense (strain DSM 10664 / DCB-2)).